We begin with the raw amino-acid sequence, 165 residues long: Myosin regulatory light chain 2, ventricular/cardiac muscle isoform (165 aa).

N,N,N-trimethylserine is present on serine 2. At asparagine 14 the chain carries Deamidated asparagine. A phosphoserine mark is found at serine 15 and serine 19. 3 EF-hand domains span residues 24 to 59, 94 to 129, and 130 to 165; these read TQIQ…LGRV, DPEE…QAER, and FSKD…GEEK. Positions 37, 39, 41, and 48 each coordinate Ca(2+). Residue threonine 52 is modified to Phosphothreonine.

Myosin is a hexamer of 2 heavy chains and 4 light chains. Interacts with MYOC. N-terminus is methylated by METTL11A/NTM1. Post-translationally, phosphorylated by MYLK3 and MYLK2; promotes cardiac muscle contraction and function. Dephosphorylated by PPP1CB complexed to PPP1R12B. The phosphorylated form in adult is expressed as gradients across the heart from endocardium (low phosphorylation) to epicardium (high phosphorylation); regulates cardiac torsion and workload distribution.

It localises to the cytoplasm. The protein resides in the myofibril. The protein localises to the sarcomere. Its subcellular location is the a band. Functionally, contractile protein that plays a role in heart development and function. Following phosphorylation, plays a role in cross-bridge cycling kinetics and cardiac muscle contraction by increasing myosin lever arm stiffness and promoting myosin head diffusion; as a consequence of the increase in maximum contraction force and calcium sensitivity of contraction force. These events altogether slow down myosin kinetics and prolong duty cycle resulting in accumulated myosins being cooperatively recruited to actin binding sites to sustain thin filament activation as a means to fine-tune myofilament calcium sensitivity to force. During cardiogenesis plays an early role in cardiac contractility by promoting cardiac myofibril assembly. The polypeptide is Myosin regulatory light chain 2, ventricular/cardiac muscle isoform (Oryctolagus cuniculus (Rabbit)).